The primary structure comprises 626 residues: Anaphase-promoting complex subunit CDC23 (626 aa).

A Phosphoserine; by CDC28 modification is found at Ser-59. TPR repeat units lie at residues 215–248 (ALLY…YSFN), 295–328 (MIKF…FPNF), 329–362 (TFLK…DPYR), 363–396 (LNDL…DRFR), 397–430 (PETC…DKKT), 431–464 (TNAW…CPRD), 465–498 (FKAW…KPWD), 499–532 (RRIW…SQTV), and 536–569 (TSIY…EELL).

The protein belongs to the APC8/CDC23 family. The APC/C is composed of at least 13 subunits that stay tightly associated throughout the cell cycle: APC1, APC2, APC4, APC5, APC9, APC11, CDC16, CDC23, CDC26, CDC27, DOC1, MND2 and SWM1. CDC23 interacts directly with SWM1 and binds the destruction box (D-box) of the substrate cyclin CLB2. Phosphorylated by CDC28, which is required for the early mitotic activity of the APC/C in its CDC20-bound form.

Its subcellular location is the nucleus. The protein localises to the chromosome. It is found in the centromere. The protein resides in the kinetochore. Its pathway is protein modification; protein ubiquitination. Its function is as follows. Component of the anaphase promoting complex/cyclosome (APC/C), a cell cycle-regulated E3 ubiquitin-protein ligase complex that controls progression through mitosis and the G1 phase of the cell cycle. The APC/C is thought to confer substrate specificity and, in the presence of ubiquitin-conjugating E2 enzymes, it catalyzes the formation of protein-ubiquitin conjugates that are subsequently degraded by the 26S proteasome. In early mitosis, the APC/C is activated by CDC20 and targets securin PDS1, the B-type cyclin CLB5, and other anaphase inhibitory proteins for proteolysis, thereby triggering the separation of sister chromatids at the metaphase-to-anaphase transition. In late mitosis and in G1, degradation of CLB5 allows activation of the APC/C by CDH1, which is needed to destroy CDC20 and the B-type cyclin CLB2 to allow exit from mitosis and creating the low CDK state necessary for cytokinesis and for reforming prereplicative complexes in G1 prior to another round of replication. In Saccharomyces cerevisiae (strain ATCC 204508 / S288c) (Baker's yeast), this protein is Anaphase-promoting complex subunit CDC23 (CDC23).